We begin with the raw amino-acid sequence, 1088 residues long: Extended synaptotagmin-1 (1088 aa).

M1 carries the post-translational modification N-acetylmethionine. Residues 1-30 (MERSPEEGAGPEPSGQSPATDSTRERDGGS) are Cytoplasmic-facing. Positions 1-38 (MERSPEEGAGPEPSGQSPATDSTRERDGGSGVPPAGPG) are disordered. Residues 31-51 (GVPPAGPGAASEALAVLTSFG) form a helical membrane-spanning segment. The Lumenal segment spans residues 52-54 (RRL). The helical transmembrane segment at 55–75 (LVLVPVYLAGAAGLSVGFVLF) threads the bilayer. The Cytoplasmic segment spans residues 76–1088 (GLALYLGWRR…LIDDRDKGGS (1013 aa)). Residues 127 to 305 (DVEKAEWLNK…LPNRLLVPLV (179 aa)) form the SMP-LTD domain. C2 domains follow at residues 304 to 425 (LVPD…DNWY), 446 to 572 (DAEK…QLSS), 618 to 740 (DAPP…DEWL), and 771 to 888 (QVNS…ALSG). S316 carries the phosphoserine; by CDK5 modification. K336, D337, D349, D396, D398, D400, D402, and D403 together coordinate Ca(2+). A disordered region spans residues 599 to 630 (TEPGAQDWDSESPETGSSVDAPPRPYHTTPNS). K806 is modified (N6-acetyllysine). Residue S809 is modified to Phosphoserine. Residues 911 to 930 (HSHSSSSLNEEPEVLGDPTH) are disordered. Phosphoserine occurs at positions 933 and 947. The C2 5 domain occupies 955–1077 (PLGQVKLTVW…DLSQGAAQWY (123 aa)). Y993 is modified (phosphotyrosine). The interval 1002–1009 (KNRGTKRK) is required for phosphatidylinositol 4,5-bisphosphate-dependent location at the cell membrane.

It belongs to the extended synaptotagmin family. Interacts with ESYT2 and ESYT3. Interacts with ADGRD1; inhibiting the G-protein-coupled receptor activity of ADGRD1. Interaction with ADGRD1 is abolished when cytosolic calcium increases, relieving ADGRD1 G-protein-coupled receptor activity. Interacts (phosphorylated form) with SLC2A4. Phosphorylated on Ser residues in insulin-treated adipocytes (in vitro); this promotes interaction with SLC2A4. As to expression, ubiquitously expressed with a higher expression in spleen and white adipose tissue.

It localises to the endoplasmic reticulum membrane. The protein resides in the cell membrane. Functionally, binds calcium (via the C2 domains) and translocates to sites of contact between the endoplasmic reticulum and the cell membrane in response to increased cytosolic calcium levels. Helps tether the endoplasmic reticulum to the cell membrane and promotes the formation of appositions between the endoplasmic reticulum and the cell membrane. Acts as an inhibitor of ADGRD1 G-protein-coupled receptor activity in absence of cytosolic calcium. Binds glycerophospholipids in a barrel-like domain and may play a role in cellular lipid transport. The chain is Extended synaptotagmin-1 (Esyt1) from Rattus norvegicus (Rat).